The sequence spans 86 residues: Sec-independent protein translocase protein TatA (86 aa).

The chain crosses the membrane as a helical span at residues 3–23 (IFGVGLPEVTVILILALLIFG). The segment at 56-86 (MNEEDESPKSIESNQTNEINQEKIDSENSKK) is disordered. Over residues 65 to 74 (SIESNQTNEI) the composition is skewed to polar residues. Residues 75-86 (NQEKIDSENSKK) are compositionally biased toward basic and acidic residues.

This sequence belongs to the TatA/E family. In terms of assembly, forms a complex with TatC.

Its subcellular location is the cell inner membrane. Part of the twin-arginine translocation (Tat) system that transports large folded proteins containing a characteristic twin-arginine motif in their signal peptide across membranes. TatA could form the protein-conducting channel of the Tat system. In Prochlorococcus marinus (strain MIT 9215), this protein is Sec-independent protein translocase protein TatA.